Reading from the N-terminus, the 153-residue chain is MNVGTAHSEVNPNTRVMNSRGIWLSYVLAIGLLHIVLLSIPFVSVPVVWTLTNLIHNMGMYIFLHTVKGTPFETPDQGKARLLTHWEQMDYGVQFTASRKFLTITPIVLYFLTSFYTKYDQIHFVLNTVSLMSVLIPKLPQLHGVRIFGINKY.

The important for ceramide level-sensing stretch occupies residues 1–17 (MNVGTAHSEVNPNTRVM). Over 1-21 (MNVGTAHSEVNPNTRVMNSRG) the chain is Cytoplasmic. The next 2 helical transmembrane spans lie at 22 to 44 (IWLS…PFVS) and 45 to 63 (VPVV…MYIF). The Cytoplasmic segment spans residues 64 to 100 (LHTVKGTPFETPDQGKARLLTHWEQMDYGVQFTASRK). Residues 101–117 (FLTITPIVLYFLTSFYT) form a helical membrane-spanning segment. At 118-121 (KYDQ) the chain is on the lumenal side. A helical membrane pass occupies residues 122-139 (IHFVLNTVSLMSVLIPKL). Pro137 carries the post-translational modification Hydroxyproline. The Cytoplasmic portion of the chain corresponds to 140-153 (PQLHGVRIFGINKY).

Belongs to the ORM family. In terms of assembly, ceramide-sensitive subunit of the serine palmitoyltransferase (SPT) complex, which is also composed of SPTLC1, SPTLC2/3 and SPTSSA/B. Post-translationally, when hydroxylated at Pro-137, ubiquitinated via 'Lys-48'-linkage, leading to proteasomal degradation. In endothelial cells, ORMDL3 proteasomal degradation is controlled by the sphingosine 1-phosphate receptor signaling pathway. As to expression, widely expressed. Expressed in adult and fetal heart, brain, lung, liver, skeletal muscle and kidney. Expressed in adult pancreas and placenta and in fetal spleen and thymus.

It localises to the endoplasmic reticulum membrane. Plays an essential role in the homeostatic regulation of sphingolipid de novo biosynthesis by modulating the activity of the serine palmitoyltransferase (SPT) in response to ceramide levels. When complexed to SPT, the binding of ceramides to its N-terminus stabilizes a conformation that block SPT substrate entry, hence preventing SPT catalytic activity. Through this mechanism, maintains ceramide levels at sufficient concentrations for the production of complex sphingolipids, but which prevents the accumulation of ceramides to levels that trigger apoptosis. In Homo sapiens (Human), this protein is ORM1-like protein 3 (ORMDL3).